The sequence spans 401 residues: Acetate kinase (401 aa).

Asn-9 lines the Mg(2+) pocket. ATP is bound at residue Lys-16. Arg-88 contacts substrate. The Proton donor/acceptor role is filled by Asp-147. ATP-binding positions include 207–211 (HLGNG), 282–284 (DCR), and 333–337 (GIGEN). Position 388 (Glu-388) interacts with Mg(2+).

It belongs to the acetokinase family. As to quaternary structure, homodimer. It depends on Mg(2+) as a cofactor. The cofactor is Mn(2+).

It is found in the cytoplasm. The catalysed reaction is acetate + ATP = acetyl phosphate + ADP. It participates in metabolic intermediate biosynthesis; acetyl-CoA biosynthesis; acetyl-CoA from acetate: step 1/2. Catalyzes the formation of acetyl phosphate from acetate and ATP. Can also catalyze the reverse reaction. The sequence is that of Acetate kinase from Haemophilus influenzae (strain PittEE).